Consider the following 247-residue polypeptide: MIDPIHQFHLNKIFTIGHIGNQEIAFTNSTAYMLLAVVLIAGMMLAAGRALVPGRFQSVVELSYEFVANTLRTSAGSHGMTFFPLVFSLFMFIFVSNIVGIIPYTFTVSSHIIVTFSLALLVFLTVIIYGFYKNGLKFFKLFVPSGIPAVILPLVVVIEIISFFSRPISHSVRLFANMLAGHVTLKVFASFVTMLGALGFVGKVGALLPLGLTVALTGLELMVAFLQAYVFTILTCIYLNDAIHPGH.

6 helical membrane passes run 32–52, 82–102, 112–132, 141–161, 181–201, and 206–226; these read YMLLAVVLIAGMMLAAGRALV, FFPLVFSLFMFIFVSNIVGII, IIVTFSLALLVFLTVIIYGFY, LFVPSGIPAVILPLVVVIEII, GHVTLKVFASFVTMLGALGFV, and ALLPLGLTVALTGLELMVAFL.

The protein belongs to the ATPase A chain family. As to quaternary structure, F-type ATPases have 2 components, CF(1) - the catalytic core - and CF(0) - the membrane proton channel. CF(1) has five subunits: alpha(3), beta(3), gamma(1), delta(1), epsilon(1). CF(0) has four main subunits: a, b, b' and c.

It localises to the cell inner membrane. In terms of biological role, key component of the proton channel; it plays a direct role in the translocation of protons across the membrane. This Bradyrhizobium sp. (strain BTAi1 / ATCC BAA-1182) protein is ATP synthase subunit a 1.